Consider the following 162-residue polypeptide: Putative ankyrin repeat protein RBE_0151 (162 aa).

ANK repeat units lie at residues 49-77 (EKWT…NINI), 81-110 (KGRT…VVAP), and 114-145 (YGWS…EHDK).

The protein is Putative ankyrin repeat protein RBE_0151 of Rickettsia bellii (strain RML369-C).